A 202-amino-acid chain; its full sequence is Small ribosomal subunit protein uS4c (202 aa).

Residues R13–T37 form a disordered region. Residues G20–T37 are compositionally biased toward polar residues. Residues M90–I153 enclose the S4 RNA-binding domain.

Belongs to the universal ribosomal protein uS4 family. As to quaternary structure, part of the 30S ribosomal subunit. Contacts protein S5. The interaction surface between S4 and S5 is involved in control of translational fidelity.

Its subcellular location is the plastid. It is found in the chloroplast. Its function is as follows. One of the primary rRNA binding proteins, it binds directly to 16S rRNA where it nucleates assembly of the body of the 30S subunit. With S5 and S12 plays an important role in translational accuracy. This is Small ribosomal subunit protein uS4c (rps4) from Takakia lepidozioides (Moss).